Here is a 447-residue protein sequence, read N- to C-terminus: N-succinylarginine dihydrolase (447 aa).

Substrate-binding positions include A19–S28, N110, and H137–R138. The active site involves E174. R213 serves as a coordination point for substrate. Residue H249 is part of the active site. Substrate contacts are provided by D251 and N364. C370 acts as the Nucleophile in catalysis.

The protein belongs to the succinylarginine dihydrolase family. In terms of assembly, homodimer.

The enzyme catalyses N(2)-succinyl-L-arginine + 2 H2O + 2 H(+) = N(2)-succinyl-L-ornithine + 2 NH4(+) + CO2. The protein operates within amino-acid degradation; L-arginine degradation via AST pathway; L-glutamate and succinate from L-arginine: step 2/5. Its function is as follows. Catalyzes the hydrolysis of N(2)-succinylarginine into N(2)-succinylornithine, ammonia and CO(2). The polypeptide is N-succinylarginine dihydrolase (Yersinia pseudotuberculosis serotype O:1b (strain IP 31758)).